Consider the following 203-residue polypeptide: LexA repressor (203 aa).

A DNA-binding region (H-T-H motif) is located at residues 32 to 52; it reads RAEICTAFGFRSPNAAETHLR. Catalysis depends on for autocatalytic cleavage activity residues S121 and K158.

The protein belongs to the peptidase S24 family. Homodimer.

It catalyses the reaction Hydrolysis of Ala-|-Gly bond in repressor LexA.. Represses a number of genes involved in the response to DNA damage (SOS response), including recA and lexA. In the presence of single-stranded DNA, RecA interacts with LexA causing an autocatalytic cleavage which disrupts the DNA-binding part of LexA, leading to derepression of the SOS regulon and eventually DNA repair. The polypeptide is LexA repressor (Aromatoleum aromaticum (strain DSM 19018 / LMG 30748 / EbN1) (Azoarcus sp. (strain EbN1))).